We begin with the raw amino-acid sequence, 455 residues long: ATP-dependent protease ATPase subunit HslU (455 aa).

ATP is bound by residues valine 23, 65-70 (GVGKTE), aspartate 266, glutamate 333, and arginine 405.

Belongs to the ClpX chaperone family. HslU subfamily. In terms of assembly, a double ring-shaped homohexamer of HslV is capped on each side by a ring-shaped HslU homohexamer. The assembly of the HslU/HslV complex is dependent on binding of ATP.

It localises to the cytoplasm. Functionally, ATPase subunit of a proteasome-like degradation complex; this subunit has chaperone activity. The binding of ATP and its subsequent hydrolysis by HslU are essential for unfolding of protein substrates subsequently hydrolyzed by HslV. HslU recognizes the N-terminal part of its protein substrates and unfolds these before they are guided to HslV for hydrolysis. The polypeptide is ATP-dependent protease ATPase subunit HslU (Xanthomonas axonopodis pv. citri (strain 306)).